Here is a 54-residue protein sequence, read N- to C-terminus: Ovomucoid (54 aa).

The region spanning 4-54 (VDCSDYPKPVCSLEDMPLCGSDSKTYSNKCNFCNAVVDSNGTLTLSHFGKC) is the Kazal-like domain. Intrachain disulfides connect Cys6–Cys36, Cys14–Cys33, and Cys22–Cys54. Residue Asn43 is glycosylated (N-linked (GlcNAc...) asparagine).

It localises to the secreted. This is Ovomucoid from Vultur gryphus (Andean condor).